The following is a 672-amino-acid chain: Spermatid perinuclear RNA-binding protein (672 aa).

The DZF domain maps to 5–363 (RSFANDDRHV…ALKRPFEDGL (359 aa)). Residues 349-371 (GAGSSALKRPFEDGLGDDKDPNK) are disordered. Positions 357 to 371 (RPFEDGLGDDKDPNK) are enriched in basic and acidic residues. The 67-residue stretch at 387-453 (DLMNALMRLN…AVKVLQAMGY (67 aa)) folds into the DRBM 1 domain. Basic and acidic residues predominate over residues 467 to 476 (DEKSDNESKN). Positions 467-514 (DEKSDNESKNDTVSSNSSNNTGNSTTETSSTLEVRTQGPILTASGKNP) are disordered. Residues 477-497 (DTVSSNSSNNTGNSTTETSST) are compositionally biased toward low complexity. One can recognise a DRBM 2 domain in the interval 510 to 576 (SGKNPVMELN…ALAALEKLFS (67 aa)). R612 and R617 each carry asymmetric dimethylarginine.

Interacts with EIF2AK2. Associates with microtubules; it is unsure whether such interaction is direct or indirect. Isoform 2 is expressed in spermatocytes (at protein level). Expressed in testis, thymus, ovary, liver, kidney, heart, spleen and brain. Expressed in cortex, dentate gyrus and Purkinje cell layer and granule cells of the cerebellum.

The protein localises to the cytoplasm. It is found in the cytoskeleton. In terms of biological role, involved in spermatogenesis and sperm function. Plays a role in regulation of cell growth. Binds to double-stranded DNA and RNA. Binds most efficiently to poly(I:C) RNA than to poly(dI:dC) DNA. Also binds to single-stranded poly(G) RNA. Binds non-specifically to the mRNA PRM1 3'-UTR and adenovirus VA RNA. In Mus musculus (Mouse), this protein is Spermatid perinuclear RNA-binding protein (Strbp).